Consider the following 93-residue polypeptide: Large ribosomal subunit protein uL23cy (93 aa).

This sequence belongs to the universal ribosomal protein uL23 family. As to quaternary structure, part of the 50S ribosomal subunit.

It is found in the plastid. Its subcellular location is the chloroplast. Functionally, binds to 23S rRNA. The sequence is that of Large ribosomal subunit protein uL23cy (rpl23-B) from Sorghum bicolor (Sorghum).